A 316-amino-acid chain; its full sequence is Transaldolase (316 aa).

Lysine 132 (schiff-base intermediate with substrate) is an active-site residue.

Belongs to the transaldolase family. Type 1 subfamily. In terms of assembly, homodimer.

The protein localises to the cytoplasm. The enzyme catalyses D-sedoheptulose 7-phosphate + D-glyceraldehyde 3-phosphate = D-erythrose 4-phosphate + beta-D-fructose 6-phosphate. It participates in carbohydrate degradation; pentose phosphate pathway; D-glyceraldehyde 3-phosphate and beta-D-fructose 6-phosphate from D-ribose 5-phosphate and D-xylulose 5-phosphate (non-oxidative stage): step 2/3. In terms of biological role, transaldolase is important for the balance of metabolites in the pentose-phosphate pathway. This Vibrio cholerae serotype O1 (strain ATCC 39541 / Classical Ogawa 395 / O395) protein is Transaldolase.